We begin with the raw amino-acid sequence, 287 residues long: ATP synthase gamma chain (287 aa).

This sequence belongs to the ATPase gamma chain family. In terms of assembly, F-type ATPases have 2 components, CF(1) - the catalytic core - and CF(0) - the membrane proton channel. CF(1) has five subunits: alpha(3), beta(3), gamma(1), delta(1), epsilon(1). CF(0) has three main subunits: a, b and c.

The protein resides in the cell inner membrane. Its function is as follows. Produces ATP from ADP in the presence of a proton gradient across the membrane. The gamma chain is believed to be important in regulating ATPase activity and the flow of protons through the CF(0) complex. The sequence is that of ATP synthase gamma chain from Salmonella paratyphi A (strain ATCC 9150 / SARB42).